Consider the following 43-residue polypeptide: Metallothionein A (43 aa).

Positions 1-16 are beta; the sequence is SCAGSCKCKNCRCRSC. The a divalent metal cation site is built by cysteine 2, cysteine 6, cysteine 8, cysteine 11, cysteine 13, cysteine 16, cysteine 20, cysteine 21, cysteine 23, cysteine 24, cysteine 28, cysteine 31, cysteine 35, and cysteine 37. An alpha region spans residues 17–43; sequence RKSCCSCCPAGCNNCAKGCVCKEPASS.

Belongs to the metallothionein superfamily. Type 1 family.

Functionally, metallothioneins have a high content of cysteine residues that bind various heavy metals. In Colinus virginianus (Northern bobwhite), this protein is Metallothionein A.